Reading from the N-terminus, the 299-residue chain is Protease HtpX homolog (299 aa).

2 helical membrane-spanning segments follow: residues 16-36 (VMAAFVILLAVIGLAVGYVFF) and 38-58 (SAIAGLLVALIAAVFYMVLMI). His-144 provides a ligand contact to Zn(2+). Residue Glu-145 is part of the active site. Zn(2+) is bound at residue His-148. A run of 2 helical transmembrane segments spans residues 159-179 (IALALTAAISLLVNWGMNAFW) and 198-218 (VLLMILAIVVIILAPLAASLV). Residue Glu-227 participates in Zn(2+) binding.

It belongs to the peptidase M48B family. It depends on Zn(2+) as a cofactor.

It is found in the cell membrane. The protein is Protease HtpX homolog of Lactiplantibacillus plantarum (strain ATCC BAA-793 / NCIMB 8826 / WCFS1) (Lactobacillus plantarum).